The following is a 476-amino-acid chain: PTS system N-acetylmuramic acid-specific EIIBC component (476 aa).

One can recognise a PTS EIIB type-1 domain in the interval 1–89; the sequence is MATIDNAMIH…KASLGDNMSS (89 aa). The active-site Phosphocysteine intermediate; for EIIB activity is the Cys-28. A PTS EIIC type-1 domain is found at 116–476; sequence AKFATIFTPL…FFATKDVDLS (361 aa). The next 10 helical transmembrane spans lie at 118-138, 160-180, 186-206, 220-240, 265-285, 304-324, 337-357, 371-391, 396-416, and 443-463; these read FATI…LLGL, LIAY…ILIG, AFGG…LGYN, FFGL…AAIV, TLLI…VYLF, VLAG…FVPV, LFPV…ALYF, GAII…VTLP, FITA…IAYL, and VLPA…TGFI.

The protein resides in the cell inner membrane. The catalysed reaction is N-acetyl-beta-D-muramate(out) + N(pros)-phospho-L-histidyl-[protein] = N-acetyl-beta-D-muramate 6-phosphate(in) + L-histidyl-[protein]. Its function is as follows. The phosphoenolpyruvate-dependent sugar phosphotransferase system (sugar PTS), a major carbohydrate active transport system, catalyzes the phosphorylation of incoming sugar substrates concomitantly with their translocation across the cell membrane. This system is involved in N-acetylmuramic acid (MurNAc) transport, yielding cytoplasmic MurNAc-6-P. Is also able to take up anhydro-N-acetylmuramic acid (anhMurNAc), but cannot phosphorylate the carbon 6, probably because of the 1,6-anhydro ring. This is PTS system N-acetylmuramic acid-specific EIIBC component (murP) from Pasteurella multocida (strain Pm70).